The primary structure comprises 191 residues: Small ribosomal subunit protein uS5 (191 aa).

Residues 21 to 84 (LVDKLVTINR…ERAKRTMIRV (64 aa)) form the S5 DRBM domain. The tract at residues 161 to 191 (PRHVASRRGKKAAELFGKREQGQTEAEVTNG) is disordered. Basic and acidic residues predominate over residues 171–182 (KAAELFGKREQG).

This sequence belongs to the universal ribosomal protein uS5 family. As to quaternary structure, part of the 30S ribosomal subunit. Contacts proteins S4 and S8.

Its function is as follows. With S4 and S12 plays an important role in translational accuracy. Functionally, located at the back of the 30S subunit body where it stabilizes the conformation of the head with respect to the body. The protein is Small ribosomal subunit protein uS5 of Gluconobacter oxydans (strain 621H) (Gluconobacter suboxydans).